A 446-amino-acid chain; its full sequence is ATP-dependent protease ATPase subunit HslU (446 aa).

Residues I17, 59 to 64, D255, E320, and R392 each bind ATP; that span reads GVGKTE.

It belongs to the ClpX chaperone family. HslU subfamily. A double ring-shaped homohexamer of HslV is capped on each side by a ring-shaped HslU homohexamer. The assembly of the HslU/HslV complex is dependent on binding of ATP.

Its subcellular location is the cytoplasm. ATPase subunit of a proteasome-like degradation complex; this subunit has chaperone activity. The binding of ATP and its subsequent hydrolysis by HslU are essential for unfolding of protein substrates subsequently hydrolyzed by HslV. HslU recognizes the N-terminal part of its protein substrates and unfolds these before they are guided to HslV for hydrolysis. The sequence is that of ATP-dependent protease ATPase subunit HslU from Pseudomonas fluorescens (strain ATCC BAA-477 / NRRL B-23932 / Pf-5).